The following is a 160-amino-acid chain: Ribosomal RNA large subunit methyltransferase H (160 aa).

S-adenosyl-L-methionine contacts are provided by residues glycine 108 and 127 to 132; that span reads FGLMTW.

This sequence belongs to the RNA methyltransferase RlmH family. Homodimer.

Its subcellular location is the cytoplasm. The enzyme catalyses pseudouridine(1915) in 23S rRNA + S-adenosyl-L-methionine = N(3)-methylpseudouridine(1915) in 23S rRNA + S-adenosyl-L-homocysteine + H(+). Its function is as follows. Specifically methylates the pseudouridine at position 1915 (m3Psi1915) in 23S rRNA. The polypeptide is Ribosomal RNA large subunit methyltransferase H (Bartonella bacilliformis (strain ATCC 35685 / KC583 / Herrer 020/F12,63)).